An 835-amino-acid chain; its full sequence is Protein translocase subunit SecA (835 aa).

ATP is bound by residues Gln85, 103–107 (GEGKT), and Asp492. Zn(2+) is bound by residues Cys819, Cys821, Cys830, and Cys831.

It belongs to the SecA family. In terms of assembly, monomer and homodimer. Part of the essential Sec protein translocation apparatus which comprises SecA, SecYEG and auxiliary proteins SecDF. Other proteins may also be involved. Requires Zn(2+) as cofactor.

The protein localises to the cell membrane. It is found in the cytoplasm. It carries out the reaction ATP + H2O + cellular proteinSide 1 = ADP + phosphate + cellular proteinSide 2.. Part of the Sec protein translocase complex. Interacts with the SecYEG preprotein conducting channel. Has a central role in coupling the hydrolysis of ATP to the transfer of proteins into and across the cell membrane, serving as an ATP-driven molecular motor driving the stepwise translocation of polypeptide chains across the membrane. This chain is Protein translocase subunit SecA, found in Clostridium botulinum (strain ATCC 19397 / Type A).